A 134-amino-acid polypeptide reads, in one-letter code: Large ribosomal subunit protein uL16c (134 aa).

Belongs to the universal ribosomal protein uL16 family. As to quaternary structure, part of the 50S ribosomal subunit.

It localises to the plastid. The protein resides in the chloroplast. The polypeptide is Large ribosomal subunit protein uL16c (Atropa belladonna (Belladonna)).